We begin with the raw amino-acid sequence, 314 residues long: Acetaldehyde dehydrogenase 1/2 (314 aa).

12–15 (SGNI) contributes to the NAD(+) binding site. C130 (acyl-thioester intermediate) is an active-site residue. NAD(+)-binding positions include 161 to 169 (SAGPGTRAN) and N288.

It belongs to the acetaldehyde dehydrogenase family.

It catalyses the reaction acetaldehyde + NAD(+) + CoA = acetyl-CoA + NADH + H(+). The protein is Acetaldehyde dehydrogenase 1/2 of Rhizorhabdus wittichii (strain DSM 6014 / CCUG 31198 / JCM 15750 / NBRC 105917 / EY 4224 / RW1) (Sphingomonas wittichii).